We begin with the raw amino-acid sequence, 751 residues long: Ribosomal RNA large subunit methyltransferase K/L (751 aa).

Positions 44–155 (LAYRTCLWSR…KNKLVLSIDL (112 aa)) constitute a THUMP domain.

It belongs to the methyltransferase superfamily. RlmKL family.

The protein resides in the cytoplasm. The enzyme catalyses guanosine(2445) in 23S rRNA + S-adenosyl-L-methionine = N(2)-methylguanosine(2445) in 23S rRNA + S-adenosyl-L-homocysteine + H(+). It carries out the reaction guanosine(2069) in 23S rRNA + S-adenosyl-L-methionine = N(2)-methylguanosine(2069) in 23S rRNA + S-adenosyl-L-homocysteine + H(+). Its function is as follows. Specifically methylates the guanine in position 2445 (m2G2445) and the guanine in position 2069 (m7G2069) of 23S rRNA. The protein is Ribosomal RNA large subunit methyltransferase K/L of Cellvibrio japonicus (strain Ueda107) (Pseudomonas fluorescens subsp. cellulosa).